A 142-amino-acid chain; its full sequence is Large ribosomal subunit protein uL11 (142 aa).

The protein belongs to the universal ribosomal protein uL11 family. As to quaternary structure, part of the ribosomal stalk of the 50S ribosomal subunit. Interacts with L10 and the large rRNA to form the base of the stalk. L10 forms an elongated spine to which L12 dimers bind in a sequential fashion forming a multimeric L10(L12)X complex. Post-translationally, one or more lysine residues are methylated.

Forms part of the ribosomal stalk which helps the ribosome interact with GTP-bound translation factors. In Bradyrhizobium sp. (strain BTAi1 / ATCC BAA-1182), this protein is Large ribosomal subunit protein uL11.